The chain runs to 109 residues: Cell division suppressor protein YneA (109 aa).

The region spanning 39 to 90 (SEVNVSEGDSLWALADQYAGKSDMAKADFVSWVEKENNLADGHVEAGDSVVI) is the LysM domain.

The protein belongs to the YneA family.

It localises to the cytoplasm. Functionally, inhibits cell division during the SOS response. Affects a later stage of the cell division protein assembly, after the assembly of the Z ring, by probably suppressing recruitment of FtsL and/or DivIC to the division machinery. The chain is Cell division suppressor protein YneA from Listeria monocytogenes serotype 4b (strain CLIP80459).